We begin with the raw amino-acid sequence, 379 residues long: PqqA peptide cyclase (379 aa).

The 213-residue stretch at 8–220 (LPAPIGLLAE…IRVVEEARER (213 aa)) folds into the Radical SAM core domain. 3 residues coordinate [4Fe-4S] cluster: Cys-22, Cys-26, and Cys-29.

This sequence belongs to the radical SAM superfamily. PqqE family. In terms of assembly, interacts with PqqD. The interaction is necessary for activity of PqqE. [4Fe-4S] cluster is required as a cofactor.

The enzyme catalyses [PQQ precursor protein] + S-adenosyl-L-methionine = E-Y cross-linked-[PQQ precursor protein] + 5'-deoxyadenosine + L-methionine + H(+). It functions in the pathway cofactor biosynthesis; pyrroloquinoline quinone biosynthesis. Functionally, catalyzes the cross-linking of a glutamate residue and a tyrosine residue in the PqqA protein as part of the biosynthesis of pyrroloquinoline quinone (PQQ). This chain is PqqA peptide cyclase, found in Methylobacterium nodulans (strain LMG 21967 / CNCM I-2342 / ORS 2060).